The sequence spans 436 residues: Citrate synthase (436 aa).

Residues His-311 and Asp-370 contribute to the active site.

The protein belongs to the citrate synthase family. Homohexamer.

It carries out the reaction oxaloacetate + acetyl-CoA + H2O = citrate + CoA + H(+). It functions in the pathway carbohydrate metabolism; tricarboxylic acid cycle; isocitrate from oxaloacetate: step 1/2. Allosterically inhibited by NADH. In Rickettsia prowazekii (strain Madrid E), this protein is Citrate synthase (gltA).